The chain runs to 180 residues: Inner membrane-spanning protein YciB (180 aa).

6 helical membrane-spanning segments follow: residues 4–24, 25–45, 49–69, 76–96, 118–138, and 150–170; these read LLSEIGPVIAFFAGFFYGGGI, QHATLYMLITSVICITLCYVI, VSKLSIISTTVLLVSGSITLI, IKIKPTILYVIFGIIFLMSGI, ITLSYRTAAFFFFMAVVNEVV, and FKVFGVIPITFIFILLQLPLL.

It belongs to the YciB family.

The protein resides in the cell inner membrane. In terms of biological role, plays a role in cell envelope biogenesis, maintenance of cell envelope integrity and membrane homeostasis. The chain is Inner membrane-spanning protein YciB from Rickettsia africae (strain ESF-5).